The primary structure comprises 235 residues: Cytidylate kinase (235 aa).

Residue 16–24 (GPAASGKST) participates in ATP binding.

Belongs to the cytidylate kinase family. Type 1 subfamily.

It is found in the cytoplasm. The catalysed reaction is CMP + ATP = CDP + ADP. It catalyses the reaction dCMP + ATP = dCDP + ADP. The sequence is that of Cytidylate kinase from Chloroherpeton thalassium (strain ATCC 35110 / GB-78).